The chain runs to 784 residues: E3 UFM1-protein ligase 1 homolog (784 aa).

Residues 405–480 (SVSTQELEDD…RGGGAGNKKA (76 aa)) form a disordered region. Over residues 444-454 (KSTKKHQRGKA) the composition is skewed to basic residues.

Belongs to the UFL1 family.

Functionally, E3 UFM1-protein ligase that mediates ufmylation of target proteins. This chain is E3 UFM1-protein ligase 1 homolog, found in Drosophila yakuba (Fruit fly).